Reading from the N-terminus, the 250-residue chain is Cysteine proteinase inhibitor 12 (250 aa).

The N-terminal stretch at 1 to 32 (MRVAATTRPASSSAAAPLPLFLLLAVAAAAAA) is a signal peptide. Cystatin domains are found at residues 49–137 (GGAH…RNTG) and 156–202 (PGWR…AEVV). A Secondary area of contact motif is present at residues 93-97 (QVVAG).

Belongs to the cystatin family. Phytocystatin subfamily.

It localises to the secreted. Functionally, specific inhibitor of cysteine proteinases. Probably involved in the regulation of endogenous processes and in defense against pests and pathogens. The protein is Cysteine proteinase inhibitor 12 of Oryza sativa subsp. japonica (Rice).